We begin with the raw amino-acid sequence, 263 residues long: Imidazole glycerol phosphate synthase subunit HisF (263 aa).

Catalysis depends on residues aspartate 11 and aspartate 131.

Belongs to the HisA/HisF family. Heterodimer of HisH and HisF.

It is found in the cytoplasm. It catalyses the reaction 5-[(5-phospho-1-deoxy-D-ribulos-1-ylimino)methylamino]-1-(5-phospho-beta-D-ribosyl)imidazole-4-carboxamide + L-glutamine = D-erythro-1-(imidazol-4-yl)glycerol 3-phosphate + 5-amino-1-(5-phospho-beta-D-ribosyl)imidazole-4-carboxamide + L-glutamate + H(+). It functions in the pathway amino-acid biosynthesis; L-histidine biosynthesis; L-histidine from 5-phospho-alpha-D-ribose 1-diphosphate: step 5/9. Its function is as follows. IGPS catalyzes the conversion of PRFAR and glutamine to IGP, AICAR and glutamate. The HisF subunit catalyzes the cyclization activity that produces IGP and AICAR from PRFAR using the ammonia provided by the HisH subunit. The protein is Imidazole glycerol phosphate synthase subunit HisF of Deinococcus geothermalis (strain DSM 11300 / CIP 105573 / AG-3a).